The sequence spans 175 residues: Large ribosomal subunit protein uL6 (175 aa).

The protein belongs to the universal ribosomal protein uL6 family. Part of the 50S ribosomal subunit.

This protein binds to the 23S rRNA, and is important in its secondary structure. It is located near the subunit interface in the base of the L7/L12 stalk, and near the tRNA binding site of the peptidyltransferase center. The chain is Large ribosomal subunit protein uL6 from Xylella fastidiosa (strain M12).